The sequence spans 682 residues: MPDRSTKATMGAEDIHERKVSMEPRDSHQDAQPRGMFQNIKFFVLCHSILQLAQLMISGYLKSSISTVEKRFGLSSQTSGLLAAFNEVGNISLILFVSYFGSRVHRPRMIGCGAILVAVAGLLMALPHFISEPYRYDHSSPDRSQDFEASLCLPTTMAPASALSNDSCSSRTETKHLTMVGIMFTAQTLLGIGGVPIQPFGISYIDDFAHHSNSPLYLGILFAITMMGPGLAYGLGSLMLRLYVDIDRMPEGGINLTTKDPRWVGAWWLGFLISAGLVVLAASPYFFFPREMPKEKYELHFRQKVLAGGASIGSKGEELSSQHEPLKKQAGLPQIAPDLTVVQFIKVFPRVLLRTLRHPIFLLVVLSQVCTSSMVAGTATFLPKFLERQFSITASFANLLLGCLTIPLAIVGIVVGGVLVKRLHLSPMQCSALCLLGSLLCLLLSLPLFFIGCSTHHIAGITQDLGAQPGPSLFPGCSEPCSCQSDDFNPVCDTSAYVEYTTPCHAGCTGRVVQEALDKSQVFYTNCSCVAGNGTISAGSCESACSRLVLPFILLISLGAAVASITHTPSFMLILRGVKKEDKTLAVGMQFMLLRVLAWMPSPVIHGSAIDTTCVHWALTCGRRAVCRYYDHDLLRNRFIGLQFFFKSGSLVCFALVLAILRQQSREASTKATVKSSDLQEL.

The disordered stretch occupies residues 1-30; it reads MPDRSTKATMGAEDIHERKVSMEPRDSHQD. Over 1–41 the chain is Cytoplasmic; it reads MPDRSTKATMGAEDIHERKVSMEPRDSHQDAQPRGMFQNIK. Residues 13–30 show a composition bias toward basic and acidic residues; the sequence is EDIHERKVSMEPRDSHQD. Ser21 carries the phosphoserine modification. A helical transmembrane segment spans residues 42-61; that stretch reads FFVLCHSILQLAQLMISGYL. Residues 62-80 are Extracellular-facing; sequence KSSISTVEKRFGLSSQTSG. Residues 81–101 traverse the membrane as a helical segment; sequence LLAAFNEVGNISLILFVSYFG. The Cytoplasmic segment spans residues 102–107; the sequence is SRVHRP. Residues 108 to 132 form a helical membrane-spanning segment; it reads RMIGCGAILVAVAGLLMALPHFISE. At 133–176 the chain is on the extracellular side; sequence PYRYDHSSPDRSQDFEASLCLPTTMAPASALSNDSCSSRTETKH. A glycan (N-linked (GlcNAc...) asparagine) is linked at Asn165. Residues 177–206 form a helical membrane-spanning segment; sequence LTMVGIMFTAQTLLGIGGVPIQPFGISYID. At 207-225 the chain is on the cytoplasmic side; that stretch reads DFAHHSNSPLYLGILFAIT. A helical transmembrane segment spans residues 226-246; that stretch reads MMGPGLAYGLGSLMLRLYVDI. Residues 247–264 are Extracellular-facing; sequence DRMPEGGINLTTKDPRWV. N-linked (GlcNAc...) asparagine glycosylation is present at Asn255. The helical transmembrane segment at 265 to 289 threads the bilayer; sequence GAWWLGFLISAGLVVLAASPYFFFP. Topologically, residues 290 to 354 are cytoplasmic; that stretch reads REMPKEKYEL…IKVFPRVLLR (65 aa). A phosphoserine mark is found at Ser311 and Ser314. The helical transmembrane segment at 355-376 threads the bilayer; it reads TLRHPIFLLVVLSQVCTSSMVA. The Extracellular segment spans residues 377–396; that stretch reads GTATFLPKFLERQFSITASF. Residues 397-420 traverse the membrane as a helical segment; that stretch reads ANLLLGCLTIPLAIVGIVVGGVLV. The Cytoplasmic portion of the chain corresponds to 421–424; sequence KRLH. The helical transmembrane segment at 425-448 threads the bilayer; sequence LSPMQCSALCLLGSLLCLLLSLPL. Residues 449 to 552 are Extracellular-facing; the sequence is FFIGCSTHHI…SACSRLVLPF (104 aa). One can recognise a Kazal-like domain in the interval 471–531; sequence PSLFPGCSEP…VFYTNCSCVA (61 aa). Intrachain disulfides connect Cys477–Cys508, Cys483–Cys504, and Cys492–Cys529. Residues Asn526 and Asn533 are each glycosylated (N-linked (GlcNAc...) asparagine). The helical transmembrane segment at 553–575 threads the bilayer; it reads ILLISLGAAVASITHTPSFMLIL. Residues 576-584 are Cytoplasmic-facing; that stretch reads RGVKKEDKT. Residues 585-610 traverse the membrane as a helical segment; the sequence is LAVGMQFMLLRVLAWMPSPVIHGSAI. Topologically, residues 611–643 are extracellular; it reads DTTCVHWALTCGRRAVCRYYDHDLLRNRFIGLQ. Residues 644 to 661 traverse the membrane as a helical segment; that stretch reads FFFKSGSLVCFALVLAIL. At 662–682 the chain is on the cytoplasmic side; the sequence is RQQSREASTKATVKSSDLQEL.

The protein belongs to the organo anion transporter (TC 2.A.60) family. Expressed in liver, kidney, heart, lung and retina. Widely distributed in all brain regions.

The protein resides in the cell membrane. The protein localises to the basal cell membrane. It is found in the apical cell membrane. The catalysed reaction is coproporphyrin III(out) = coproporphyrin III(in). It carries out the reaction substance P(out) = substance P(in). The enzyme catalyses taurocholate(out) = taurocholate(in). It catalyses the reaction prostaglandin E1(out) = prostaglandin E1(in). The catalysed reaction is prostaglandin E2(out) = prostaglandin E2(in). It carries out the reaction prostaglandin D2(out) = prostaglandin D2(in). The enzyme catalyses leukotriene C4(out) = leukotriene C4(in). It catalyses the reaction L-thyroxine(out) = L-thyroxine(in). Its function is as follows. Mediates the Na(+)-independent transport of organic anions such as taurocholate, the prostaglandins D2 (PGD2), E1 (PGE1) and E2 (PGE2), leukotriene C4, thromboxane B2 and L-thyroxine. Also plays a role in the reuptake of neuropeptides such as substance P/TAC1 and vasoactive intestinal peptide/VIP released from retinal neurons. May act as a heme transporter that promotes cellular iron availability. Also transports heme by-product coproporphyrin III (CPIII), and may be involved in their hepatic disposition. May contribute to regulate the transport of organic compounds in testis across the blood-testis-barrier. Shows a pH-sensitive substrate specificity which may be ascribed to the protonation state of the binding site and leads to a stimulation of substrate transport in an acidic microenvironment. The exact transport mechanism has not been yet deciphered but most likely involves an anion exchange, coupling the cellular uptake of organic substrate with the efflux of an anionic compound. Hydrogencarbonate/HCO3(-) acts as a probable counteranion that exchanges for organic anions. Cytoplasmic glutamate may also act as counteranion in the placenta. This is Solute carrier organic anion transporter family member 2B1 from Rattus norvegicus (Rat).